The primary structure comprises 101 residues: UPF0235 protein SG2030 (101 aa).

This sequence belongs to the UPF0235 family.

The chain is UPF0235 protein SG2030 from Sodalis glossinidius (strain morsitans).